We begin with the raw amino-acid sequence, 383 residues long: Processive diacylglycerol beta-glucosyltransferase (383 aa).

It belongs to the glycosyltransferase 28 family. UgtP subfamily.

Its subcellular location is the cell membrane. It carries out the reaction a 1,2-diacyl-3-O-(beta-D-glucopyranosyl)-sn-glycerol + UDP-alpha-D-glucose = a 1,2-diacyl-3-O-(beta-D-Glc-(1-&gt;6)-beta-D-Glc)-sn-glycerol + UDP + H(+). The enzyme catalyses a 1,2-diacyl-3-O-(beta-D-Glc-(1-&gt;6)-beta-D-Glc)-sn-glycerol + UDP-alpha-D-glucose = a 1,2-diacyl-3-O-(beta-D-Glc-(1-&gt;6)-beta-D-Glc-(1-&gt;6)-beta-D-Glc)-sn-glycerol + UDP + H(+). The catalysed reaction is a 1,2-diacyl-sn-glycerol + UDP-alpha-D-glucose = a 1,2-diacyl-3-O-(beta-D-glucopyranosyl)-sn-glycerol + UDP + H(+). The protein operates within glycolipid metabolism; diglucosyl-diacylglycerol biosynthesis. Processive glucosyltransferase involved in the biosynthesis of both the bilayer- and non-bilayer-forming membrane glucolipids. Is able to successively transfer up to three glucosyl residues to diacylglycerol (DAG), thereby catalyzing the formation of beta-monoglucosyl-DAG (3-O-(beta-D-glucopyranosyl)-1,2-diacyl-sn-glycerol), beta-diglucosyl-DAG (3-O-(beta-D-glucopyranosyl-beta-(1-&gt;6)-D-glucopyranosyl)-1,2-diacyl-sn-glycerol) and beta-triglucosyl-DAG (3-O-(beta-D-glucopyranosyl-beta-(1-&gt;6)-D-glucopyranosyl-beta-(1-&gt;6)-D-glucopyranosyl)-1,2-diacyl-sn-glycerol). Beta-diglucosyl-DAG is the predominant glycolipid found in Bacillales and is also used as a membrane anchor for lipoteichoic acid (LTA). The polypeptide is Processive diacylglycerol beta-glucosyltransferase (Bacillus pumilus (strain SAFR-032)).